The chain runs to 559 residues: Dihydroxy-acid dehydratase (559 aa).

Cys-49 lines the [2Fe-2S] cluster pocket. Asp-81 provides a ligand contact to Mg(2+). Residue Cys-122 participates in [2Fe-2S] cluster binding. Mg(2+) contacts are provided by Asp-123 and Lys-124. N6-carboxylysine is present on Lys-124. Cys-194 contacts [2Fe-2S] cluster. Glu-446 lines the Mg(2+) pocket. Residue Ser-472 is the Proton acceptor of the active site.

The protein belongs to the IlvD/Edd family. As to quaternary structure, homodimer. [2Fe-2S] cluster serves as cofactor. Requires Mg(2+) as cofactor.

The enzyme catalyses (2R)-2,3-dihydroxy-3-methylbutanoate = 3-methyl-2-oxobutanoate + H2O. The catalysed reaction is (2R,3R)-2,3-dihydroxy-3-methylpentanoate = (S)-3-methyl-2-oxopentanoate + H2O. The protein operates within amino-acid biosynthesis; L-isoleucine biosynthesis; L-isoleucine from 2-oxobutanoate: step 3/4. Its pathway is amino-acid biosynthesis; L-valine biosynthesis; L-valine from pyruvate: step 3/4. Functions in the biosynthesis of branched-chain amino acids. Catalyzes the dehydration of (2R,3R)-2,3-dihydroxy-3-methylpentanoate (2,3-dihydroxy-3-methylvalerate) into 2-oxo-3-methylpentanoate (2-oxo-3-methylvalerate) and of (2R)-2,3-dihydroxy-3-methylbutanoate (2,3-dihydroxyisovalerate) into 2-oxo-3-methylbutanoate (2-oxoisovalerate), the penultimate precursor to L-isoleucine and L-valine, respectively. The chain is Dihydroxy-acid dehydratase from Prochlorococcus marinus subsp. pastoris (strain CCMP1986 / NIES-2087 / MED4).